We begin with the raw amino-acid sequence, 248 residues long: Non-specific acid phosphatase (248 aa).

Residues 1–20 form the signal peptide; that stretch reads MKKLLAVFCAGAFVSTSVFA.

The protein belongs to the class A bacterial acid phosphatase family.

It is found in the periplasm. The enzyme catalyses a phosphate monoester + H2O = an alcohol + phosphate. This is Non-specific acid phosphatase (phoN) from Providencia stuartii.